A 363-amino-acid polypeptide reads, in one-letter code: Protein Wnt-5b (363 aa).

A signal peptide spans 1–21 (MDVRMNQGHLLLAVTLIVCNS). An intrachain disulfide couples Cys-87 to Cys-98. N-linked (GlcNAc...) asparagine glycosylation is found at Asn-97 and Asn-103. 10 disulfide bridges follow: Cys-137–Cys-145, Cys-147–Cys-165, Cys-221–Cys-235, Cys-223–Cys-230, Cys-292–Cys-323, Cys-308–Cys-318, Cys-322–Cys-362, Cys-338–Cys-353, Cys-340–Cys-350, and Cys-345–Cys-346. A lipid anchor (O-palmitoleoyl serine; by PORCN) is attached at Ser-227. N-linked (GlcNAc...) asparagine glycosylation is found at Asn-295 and Asn-309.

This sequence belongs to the Wnt family. Post-translationally, palmitoleoylation is required for efficient binding to frizzled receptors. Depalmitoleoylation leads to Wnt signaling pathway inhibition.

Its subcellular location is the secreted. It is found in the extracellular space. It localises to the extracellular matrix. Ligand for members of the frizzled family of seven transmembrane receptors. Can activate or inhibit canonical Wnt signaling, depending on receptor context. Required during embryogenesis for extension of the primary anterior-posterior axis. Regulates convergent extension movements and hypaxial myogenesis during gastrulation via activation of non-canonical Wnt signaling. In Danio rerio (Zebrafish), this protein is Protein Wnt-5b (wnt5b).